The following is a 674-amino-acid chain: CLK4-associating serine/arginine rich protein (674 aa).

At serine 101 the chain carries Phosphoserine. Disordered regions lie at residues 171-232 (TVAE…GMAD) and 258-674 (EKAM…HYRH). Acidic residues predominate over residues 182–214 (PEEEESAAEEESNSDEDEVIPDIDVEVDVDELN). A compositionally biased stretch (basic residues) spans 265–283 (RRSRRQRREFREKRLRGRK). Serine 285 and serine 294 each carry phosphoserine. A compositionally biased stretch (basic and acidic residues) spans 290–313 (ARRDSPTYDPYKRSPSESSSESRS). Position 327 is a phosphothreonine (threonine 327). Phosphoserine occurs at positions 331 and 335. Over residues 356–365 (PPAPPQPGGP) the composition is skewed to pro residues. Low complexity predominate over residues 378 to 399 (SSSSSSSSASRTSSSRSSSRSS). 2 stretches are compositionally biased toward basic residues: residues 411–443 (SGRH…RRHS) and 481–492 (RGGRGLRHHSSS). Composition is skewed to low complexity over residues 493–506 (RSRS…SRSR) and 514–532 (HSPS…SQSP). Serine 547 carries the post-translational modification Phosphoserine. Threonine 573 carries the phosphothreonine modification. A coiled-coil region spans residues 585–647 (ALNRQFKADK…ERQYSRQSRS (63 aa)). Basic and acidic residues-rich tracts occupy residues 590–617 (FKAD…ELRA) and 625–641 (KERE…ERQY). A compositionally biased stretch (low complexity) spans 642–651 (SRQSRSPSPR). A compositionally biased stretch (basic residues) spans 659–674 (SRRRSRSRSRSPHYRH).

The protein belongs to the splicing factor SR family. In terms of assembly, probably interacts with CLK4. Phosphorylated in vitro by CLK4.

It is found in the nucleus. In terms of biological role, probably functions as an alternative splicing regulator. May regulate the mRNA splicing of genes such as CLK1. May act by regulating members of the CLK kinase family. The polypeptide is CLK4-associating serine/arginine rich protein (CLASRP) (Homo sapiens (Human)).